An 822-amino-acid polypeptide reads, in one-letter code: Putative endoplasmic reticulum metallopeptidase 1 (822 aa).

Residues 1–14 (MVLVCASSSKCKRN) are Cytoplasmic-facing. Residues 15–35 (TFLQLAMVLFAVVMARIALYF) traverse the membrane as a helical segment. Topologically, residues 36–365 (HNHLDEPLVD…FNSLFFMYSK (330 aa)) are lumenal. Asn146 carries N-linked (GlcNAc...) asparagine glycosylation. Zn(2+) contacts are provided by His161 and Asp173. The active-site Proton acceptor is the Glu207. Glu208 and Glu234 together coordinate Zn(2+). Asn291 carries N-linked (GlcNAc...) asparagine glycosylation. His307 is a Zn(2+) binding site. The chain crosses the membrane as a helical span at residues 366–384 (LTSKILNTLVGGLGILLTL). Residues 385–392 (RGSEGSFT) lie on the Cytoplasmic side of the membrane. Residues 393 to 413 (VALIAQVISIAGIFVIPNIWA) form a helical membrane-spanning segment. Residues 414–431 (YILGNVLDCGMSWFRNEY) are Lumenal-facing. Residues 432–452 (WPLFIYLPAIFASLFFTESLF) form a helical membrane-spanning segment. Over 453–463 (KRSEHLALRAT) the chain is Cytoplasmic. The helical transmembrane segment at 464–484 (IFIFSLLTFIPLPSAYLFTII) threads the bilayer. Position 485 (Asp485) is a topological domain, lumenal. Residues 486–506 (FFMVFALFLNDKILAKPGTVH) traverse the membrane as a helical segment. Residues 507–514 (PLTYFIGS) lie on the Cytoplasmic side of the membrane. Residues 515–535 (IGAMTVGFESAINLLEIFVPL) form a helical membrane-spanning segment. At 536 to 547 (TGRIGTDKVADN) the chain is on the lumenal side. The chain crosses the membrane as a helical span at residues 548-568 (VVATVCVCGFNIYFPLMSPWI). Residues 569–575 (QRFRSRC) are Cytoplasmic-facing. Residues 576–596 (CFRLGLLFSIFVVGFSSFILA) traverse the membrane as a helical segment. The Lumenal segment spans residues 597–822 (KQDTYYDSLH…GVVSGNFKLE (226 aa)). N-linked (GlcNAc...) asparagine glycans are attached at residues Asn617, Asn682, Asn706, and Asn758.

Belongs to the peptidase M28 family. M28B subfamily. Requires Zn(2+) as cofactor.

The protein localises to the endoplasmic reticulum membrane. The protein is Putative endoplasmic reticulum metallopeptidase 1 of Schizosaccharomyces pombe (strain 972 / ATCC 24843) (Fission yeast).